Reading from the N-terminus, the 373-residue chain is 3 beta-hydroxysteroid dehydrogenase/Delta 5--&gt;4-isomerase type 6 (373 aa).

The active-site Proton acceptor is the Y155. K159 provides a ligand contact to NAD(+). A helical transmembrane segment spans residues 288-308 (VPLLYWLAFMLETVSFLLSPI).

This sequence belongs to the 3-beta-HSD family. As to expression, expressed in skin and testis.

It localises to the endoplasmic reticulum membrane. It is found in the mitochondrion membrane. The enzyme catalyses a 3beta-hydroxy-Delta(5)-steroid + NAD(+) = a 3-oxo-Delta(5)-steroid + NADH + H(+). The catalysed reaction is a 3-oxo-Delta(5)-steroid = a 3-oxo-Delta(4)-steroid. Its pathway is lipid metabolism; steroid biosynthesis. Its function is as follows. 3-beta-HSD is a bifunctional enzyme, that catalyzes the oxidative conversion of Delta(5)-ene-3-beta-hydroxy steroid, and the oxidative conversion of ketosteroids. The 3-beta-HSD enzymatic system plays a crucial role in the biosynthesis of all classes of hormonal steroids. May be involved in local production of progesterone. This Mus musculus (Mouse) protein is 3 beta-hydroxysteroid dehydrogenase/Delta 5--&gt;4-isomerase type 6 (Hsd3b6).